Reading from the N-terminus, the 201-residue chain is MIEFVRGYVDYVCPEYIVIDNNGIGYQIFTPNPFSFQESRDTIVTVYTYQYVREDTLALYGFRTREERTLFAKLLQVSGIGPKGGLAILAAGQPEQLVEAIEQENETFLCKFPGVGKKTARQMILDLKGKLTAVTAKTFPDLFHLQEESARPHLSALEEAIEALKALGYAEREIQKVVPSLMKENLSTDQYVKRALQQLLK.

The segment at 1–63 (MIEFVRGYVD…EDTLALYGFR (63 aa)) is domain I. Positions 64–142 (TREERTLFAK…AVTAKTFPDL (79 aa)) are domain II. A flexible linker region spans residues 143–153 (FHLQEESARPH). Residues 153–201 (HLSALEEAIEALKALGYAEREIQKVVPSLMKENLSTDQYVKRALQQLLK) are domain III.

The protein belongs to the RuvA family. Homotetramer. Forms an RuvA(8)-RuvB(12)-Holliday junction (HJ) complex. HJ DNA is sandwiched between 2 RuvA tetramers; dsDNA enters through RuvA and exits via RuvB. An RuvB hexamer assembles on each DNA strand where it exits the tetramer. Each RuvB hexamer is contacted by two RuvA subunits (via domain III) on 2 adjacent RuvB subunits; this complex drives branch migration. In the full resolvosome a probable DNA-RuvA(4)-RuvB(12)-RuvC(2) complex forms which resolves the HJ.

It localises to the cytoplasm. In terms of biological role, the RuvA-RuvB-RuvC complex processes Holliday junction (HJ) DNA during genetic recombination and DNA repair, while the RuvA-RuvB complex plays an important role in the rescue of blocked DNA replication forks via replication fork reversal (RFR). RuvA specifically binds to HJ cruciform DNA, conferring on it an open structure. The RuvB hexamer acts as an ATP-dependent pump, pulling dsDNA into and through the RuvAB complex. HJ branch migration allows RuvC to scan DNA until it finds its consensus sequence, where it cleaves and resolves the cruciform DNA. This chain is Holliday junction branch migration complex subunit RuvA, found in Geobacillus sp. (strain WCH70).